We begin with the raw amino-acid sequence, 454 residues long: PC-esterase domain-containing protein 1A (454 aa).

The protein belongs to the PC-esterase family.

This chain is PC-esterase domain-containing protein 1A (PCED1A), found in Homo sapiens (Human).